The sequence spans 330 residues: Phosphatidylglycerol--prolipoprotein diacylglyceryl transferase (330 aa).

3 consecutive transmembrane segments (helical) span residues 22–42 (LPIRAYALLIILGIVAALVVG), 57–77 (YDIALWAVPFGLVGGRLYHLA), and 97–117 (IWDGGLGIWGAVALGCVGAWL). Arginine 145 lines the a 1,2-diacyl-sn-glycero-3-phospho-(1'-sn-glycerol) pocket. Helical transmembrane passes span 193–213 (VVQPTFLYELIWNVLVFFALI) and 257–277 (INSFTSTFVFIGAVVYIILAP).

This sequence belongs to the Lgt family.

It localises to the cell membrane. It carries out the reaction L-cysteinyl-[prolipoprotein] + a 1,2-diacyl-sn-glycero-3-phospho-(1'-sn-glycerol) = an S-1,2-diacyl-sn-glyceryl-L-cysteinyl-[prolipoprotein] + sn-glycerol 1-phosphate + H(+). Its pathway is protein modification; lipoprotein biosynthesis (diacylglyceryl transfer). Functionally, catalyzes the transfer of the diacylglyceryl group from phosphatidylglycerol to the sulfhydryl group of the N-terminal cysteine of a prolipoprotein, the first step in the formation of mature lipoproteins. The protein is Phosphatidylglycerol--prolipoprotein diacylglyceryl transferase of Mycobacterium leprae (strain Br4923).